Consider the following 1690-residue polypeptide: rRNA biogenesis protein rrp5 (1690 aa).

Disordered stretches follow at residues 1–42 (MAGN…GASS) and 59–90 (FMESASGTAELSKKTRPKKKGSKKSSKSELDN). Positions 11–32 (ASEGSDSQGNERISSLSANEAT) are enriched in polar residues. A compositionally biased stretch (basic residues) spans 72-83 (KTRPKKKGSKKS). 13 consecutive S1 motif domains span residues 109–209 (GSLI…LSLK), 226–289 (GSMI…LTAT), 306–376 (GDYI…VSFL), 398–473 (GFIV…LSFQ), 490–559 (GQFV…LTLK), 579–648 (GTQT…VGCR), 666–739 (GSVL…LSLK), 761–830 (GIKY…MSFK), 866–942 (GKIT…ISHR), 973–1044 (GDEV…IGPL), 1053–1122 (GSRL…LSAR), 1147–1216 (GDIC…MSLK), and 1236–1307 (GSNL…LGLK). Residues 1313 to 1424 (SDSDISMSDN…EEKDLDEIPS (112 aa)) form a disordered region. Composition is skewed to acidic residues over residues 1348 to 1367 (QSEEVENLESAGDEDEEEEP), 1390 to 1400 (DTEDSEDEEDE), and 1412 to 1421 (FDDEEKDLDE). Threonine 1391 carries the phosphothreonine modification. Serine 1394 carries the phosphoserine modification. HAT repeat units follow at residues 1420-1452 (DEIPSTAADFERQLLSSPNSSLLWISYMAYHLN), 1526-1558 (GKVDLADEYMQLMLKNFKQVPSVWIQYATFLLN), and 1596-1628 (GDPERGRTIFEGLLSSYPKRLDLWNVLIDMEMK). A phosphoserine mark is found at serine 1684 and serine 1686.

Component of the ribosomal small subunit (SSU) processome.

The protein resides in the nucleus. It is found in the nucleolus. Functionally, involved in the biogenesis of rRNA. Required for the formation of 18S and 5.8S rRNA. This Schizosaccharomyces pombe (strain 972 / ATCC 24843) (Fission yeast) protein is rRNA biogenesis protein rrp5.